Here is a 92-residue protein sequence, read N- to C-terminus: MSASEFDDRFVTVPLRDVTKVPSHERAGEAMNIIRQHLAKQFAVDEDAVRLDPSINDAVWSEGNNNPPRKLRVHAGSFAEDGETVVEADYEG.

This sequence belongs to the eukaryotic ribosomal protein eL31 family.

The chain is Large ribosomal subunit protein eL31 from Halobacterium salinarum (strain ATCC 29341 / DSM 671 / R1).